Here is a 243-residue protein sequence, read N- to C-terminus: Glutathione S-transferase U14 (243 aa).

The 83-residue stretch at 5–87 (DTVKLIGCSD…YLDEAWPSDP (83 aa)) folds into the GST N-terminal domain. Residues 15–16 (DP), 44–45 (EK), 58–59 (KT), and 71–72 (ES) each bind glutathione. A GST C-terminal domain is found at 93 to 220 (NAYDRASARF…MPTVEEVTEL (128 aa)). Residue Thr-159 is modified to Phosphothreonine.

It belongs to the GST superfamily. Tau family.

Its subcellular location is the cytoplasm. It is found in the cytosol. The catalysed reaction is RX + glutathione = an S-substituted glutathione + a halide anion + H(+). May be involved in the conjugation of reduced glutathione to a wide number of exogenous and endogenous hydrophobic electrophiles and have a detoxification role against certain herbicides. This chain is Glutathione S-transferase U14 (GSTU14), found in Arabidopsis thaliana (Mouse-ear cress).